Here is a 289-residue protein sequence, read N- to C-terminus: Survival motor neuron protein (289 aa).

Over residues 1 to 10 the composition is skewed to gly residues; the sequence is MAMGSGGGAG. The interval 1 to 27 is disordered; that stretch reads MAMGSGGGAGSEQEDTVLFRRGTGQSD. The tract at residues 11-42 is P1 (binding site for GEMIN2); the sequence is SEQEDTVLFRRGTGQSDDSDIWDDTALIKAYD. Threonine 23 bears the Phosphothreonine mark. Residues serine 26 and serine 29 each carry the phosphoserine modification. Residue lysine 49 forms a Glycyl lysine isopeptide (Lys-Gly) (interchain with G-Cter in SUMO2) linkage. The segment at 55 to 88 is disordered; that stretch reads GDMCETSDKPKGTARRKPAKKNKNQKKNATAPLK. Over residues 66–80 the composition is skewed to basic residues; that stretch reads GTARRKPAKKNKNQK. Position 67 is a phosphothreonine (threonine 67). The Tudor domain maps to 89–149; it reads QWKAGDKCSA…LSPTCEVANN (61 aa). The tract at residues 95–205 is required for interaction with RPP20/POP7; sequence KCSAVWSEDG…VPGAGLGPGK (111 aa). The tract at residues 150–226 is disordered; sequence TEQNTQENES…PPPPPPFLPC (77 aa). Residues 171–181 show a composition bias toward basic residues; that stretch reads RSLRSKAHSKS. A Glycyl lysine isopeptide (Lys-Gly) (interchain with G-Cter in SUMO2) cross-link involves residue lysine 205. Residues 212–226 are compositionally biased toward pro residues; sequence GPPPPPPPPPPFLPC. Residues 235–262 are P2 (binding site for SM B); that stretch reads PPIIPPPPPISPDCLDDTDALGSMLISW. The tract at residues 274–289 is required for interaction with SYNCRIP; that stretch reads GFRQNKKEGKKCSHTN.

Belongs to the SMN family. As to quaternary structure, homooligomer; may form higher order homooligomers in the dimer to octamer range. Part of the core SMN complex that contains SMN1, GEMIN2/SIP1, DDX20/GEMIN3, GEMIN4, GEMIN5, GEMIN6, GEMIN7, GEMIN8 and STRAP/UNRIP. Part of the SMN-Sm complex that contains SMN1, GEMIN2/SIP1, DDX20/GEMIN3, GEMIN4, GEMIN5, GEMIN6, GEMIN7, GEMIN8, STRAP/UNRIP and the Sm proteins SNRPB, SNRPD1, SNRPD2, SNRPD3, SNRPE, SNRPF and SNRPG. Component of an import snRNP complex composed of KPNB1, RNUT1, SMN1 and ZNF259. Interacts with DDX20, FBL, NOLA1, RNUT1 and with several spliceosomal snRNP core Sm proteins, including SNRPB, SNRPD1, SNRPD2, SNRPD3, SNRPE and ILF3. Interacts with GEMIN2; the interaction is direct. Interacts with GEMIN3; the interaction is direct. Interacts with GEMIN8; the interaction is direct. Interacts with SNRPB; the interaction is direct. Interacts (via Tudor domain) with SNRPD1 (via C-terminus); the interaction is direct. Interacts with SNRPD2; the interaction is direct. Interacts (via Tudor domain) with SNRPD3 (via C-terminus); the interaction is direct. Interacts with SNRPE; the interaction is direct. Interacts with OSTF1, LSM10, LSM11 and RPP20/POP7. Interacts (via C-terminal region) with ZPR1 (via C-terminal region). Interacts (via Tudor domain) with COIL. Interacts with SETX; recruits SETX to POLR2A. Interacts with POLR2A (via the C-terminal domain (CTD)). Interacts with PRMT5. Interacts with XRN2. Interacts (via C-terminus) with FMR1 (via C-terminus); the interaction is direct and occurs in a RNA-independent manner. Interacts with SYNCRIP. Interacts (via Tudor domain) with SF3B2 (methylated form). Interacts with WRAP53/TCAB1. Interacts (via Tudor domain) with ELAVL4 in an RNA-independent manner; the interaction is required for localization of ELAVL4 to RNA granules. Interacts with FRG1.

It localises to the nucleus. Its subcellular location is the gem. The protein localises to the cajal body. It is found in the cytoplasm. The protein resides in the cytoplasmic granule. It localises to the perikaryon. Its subcellular location is the cell projection. The protein localises to the neuron projection. It is found in the axon. The protein resides in the myofibril. It localises to the sarcomere. Its subcellular location is the z line. Functionally, the SMN complex catalyzes the assembly of small nuclear ribonucleoproteins (snRNPs), the building blocks of the spliceosome, and thereby plays an important role in the splicing of cellular pre-mRNAs. Most spliceosomal snRNPs contain a common set of Sm proteins SNRPB, SNRPD1, SNRPD2, SNRPD3, SNRPE, SNRPF and SNRPG that assemble in a heptameric protein ring on the Sm site of the small nuclear RNA to form the core snRNP (Sm core). In the cytosol, the Sm proteins SNRPD1, SNRPD2, SNRPE, SNRPF and SNRPG are trapped in an inactive 6S pICln-Sm complex by the chaperone CLNS1A that controls the assembly of the core snRNP. To assemble core snRNPs, the SMN complex accepts the trapped 5Sm proteins from CLNS1A forming an intermediate. Binding of snRNA inside 5Sm ultimately triggers eviction of the SMN complex, thereby allowing binding of SNRPD3 and SNRPB to complete assembly of the core snRNP. Within the SMN complex, SMN1 acts as a structural backbone and together with GEMIN2 it gathers the Sm complex subunits. Ensures the correct splicing of U12 intron-containing genes that may be important for normal motor and proprioceptive neurons development. Also required for resolving RNA-DNA hybrids created by RNA polymerase II, that form R-loop in transcription terminal regions, an important step in proper transcription termination. May also play a role in the metabolism of small nucleolar ribonucleoprotein (snoRNPs). This Rattus norvegicus (Rat) protein is Survival motor neuron protein (Smn1).